Consider the following 599-residue polypeptide: Estrogen receptor (599 aa).

Residues 1-188 (MTMTLHTKAS…IMESAKETRY (188 aa)) are modulating (transactivation AF-1); mediates interaction with MACROD1. O-linked (GlcNAc) serine glycosylation occurs at Ser-10. The tract at residues 35 to 47 (MERALGEVYVDNS) is required for interaction with NCOA1. The tract at residues 35 to 178 (MERALGEVYV…LSSSNEKGNM (144 aa)) is interaction with DDX5; self-association. Residue Thr-50 is glycosylated (O-linked (GlcNAc) threonine). A phosphoserine; by CDK2 mark is found at Ser-108 and Ser-110. Ser-122 is modified (phosphoserine). The interval 147 to 175 (DTGPPAFYRSNSDNRRQNGRERLSSSNEK) is disordered. Basic and acidic residues predominate over residues 158-169 (SDNRRQNGRERL). Phosphoserine; by CK2 is present on Ser-171. 2 NR C4-type zinc fingers span residues 189–209 (CAVC…CEGC) and 225–249 (CPAT…LRKC). The segment at residues 189–254 (CAVCNDYASG…RLRKCYEVGM (66 aa)) is a DNA-binding region (nuclear receptor). Residues 189 to 314 (CAVCNDYASG…TKKNSPALSL (126 aa)) are mediates interaction with DNTTIP2. Residues 255-314 (MKGGIRKDRRGGRMLKHKRQRDDLEGRNEMGASGDMRAANLWPSPLVIKHTKKNSPALSL) are hinge. Arg-264 carries the post-translational modification Asymmetric dimethylarginine; by PRMT1. An interaction with AKAP13 region spans residues 266–599 (GRMLKHKRQR…PEAEGFPNTI (334 aa)). The self-association stretch occupies residues 268 to 599 (MLKHKRQRDD…PEAEGFPNTI (332 aa)). One can recognise an NR LBD domain in the interval 315-551 (TADQMVSALL…DLLLEMLDAH (237 aa)). A transactivation AF-2 region spans residues 315 to 599 (TADQMVSALL…PEAEGFPNTI (285 aa)). Residues Glu-357 and Arg-398 each contribute to the 17beta-estradiol site. A lipid anchor (S-palmitoyl cysteine) is attached at Cys-451. Residue His-528 coordinates 17beta-estradiol. Tyr-541 carries the post-translational modification Phosphotyrosine; by Tyr-kinases. The segment at 557–581 (ASRMGVPPEEPSQTQLATTSSTSAH) is disordered. The span at 568-581 (SQTQLATTSSTSAH) shows a compositional bias: low complexity. Thr-575 is a glycosylation site (O-linked (GlcNAc) threonine).

This sequence belongs to the nuclear hormone receptor family. NR3 subfamily. As to quaternary structure, interacts with BCAS3. Binds DNA as a homodimer. Can form a heterodimer with ESR2. Interacts with coactivator NCOA5. Interacts with PELP1, the interaction is enhanced by 17-beta-estradiol; the interaction increases ESR1 transcriptional activity. Interacts with NCOA7; the interaction is ligand-inducible. Interacts with AKAP13, CUEDC2, HEXIM1, KDM5A, MAP1S, SMARD1, and UBE1C. Interacts with MUC1; the interaction is stimulated by 7 beta-estradiol (E2) and enhances ESR1-mediated transcription. Interacts with DNTTIP2, and UIMC1. Interacts with KMT2D/MLL2. Interacts with ATAD2; the interaction is enhanced by estradiol. Interacts with KIF18A and LDB1. Interacts with RLIM (via its C-terminus). Interacts with MACROD1. Interacts with SH2D4A and PLCG. Interacts with SH2D4A; the interaction blocks binding to PLCG and inhibits estrogen-induced cell proliferation. Interacts with DYNLL1. Interacts with CCDC62; the interaction requires estradiol and appears to enhance the transcription of target genes. Interacts with NR2C1; the interaction prevents homodimerization of ESR1 and suppresses its transcriptional activity and cell growth. Interacts with DNAAF4. Interacts with PRMT2. Interacts with RBFOX2. Interacts with EP300; the interaction is estrogen-dependent and enhanced by CITED1. Interacts with CITED1; the interaction is estrogen-dependent. Interacts with FAM120B, FOXL2, PHB2 and SLC30A9. Interacts with coactivators NCOA3 and NCOA6. Interacts with STK3/MST2 only in the presence of SAV1 and vice-versa. Binds to CSNK1D. Interacts with NCOA2; NCOA2 can interact with ESR1 AF-1 and AF-2 domains simultaneously and mediate their transcriptional synergy. Interacts with DDX5. Interacts with NCOA1; the interaction seems to require a self-association of N-terminal and C-terminal regions. Interacts with ZNF366, DDX17, NFKB1, RELA, SP1 and SP3. Interacts with NRIP1. Interacts with GPER1; the interaction occurs in an estrogen-dependent manner. Interacts with CLOCK and the interaction is stimulated by estrogen. Interacts with BCAS3. Interacts with TRIP4 (ufmylated); estrogen dependent. Interacts with LMTK3; the interaction phosphorylates ESR1 (in vitro) and protects it against proteasomal degradation. Interacts with CCAR2 (via N-terminus) in a ligand-independent manner. Interacts with ZFHX3. Interacts with SFR1 in a ligand-dependent and -independent manner. Interacts with DCAF13, LATS1 and DCAF1; regulates ESR1 ubiquitination and ubiquitin-mediated proteasomal degradation. Interacts (via DNA-binding domain) with POU4F2 isoform 2 (C-terminus); this interaction increases the estrogen receptor ESR1 transcriptional activity in a DNA- and ligand 17-beta-estradiol-independent manner. Interacts with ESRRB isoform 1. Interacts with UBE3A and WBP2. Interacts with GTF2B. Interacts with RBM39. In the absence of hormonal ligand, interacts with TACC1. Interacts with PI3KR1 or PI3KR2 and PTK2/FAK1. Interacts with SRC. Interacts with BAG1; the interaction is promoted in the absence of estradiol (17-beta-estradiol/E2). Interacts with and ubiquitinated by STUB1; the interaction is promoted in the absence of estradiol (17-beta-estradiol/E2). Interacts with NEDD8. Phosphorylated by cyclin A/CDK2 and CK1. Phosphorylation probably enhances transcriptional activity. Dephosphorylation at Ser-122 by PPP5C inhibits its transactivation activity. Phosphorylated by LMTK3 (in vitro). Post-translationally, ubiquitinated. Deubiquitinated by OTUB1. In terms of processing, palmitoylated at Cys-451 by ZDHHC7 and ZDHHC21. This modification is required for plasma membrane targeting and for rapid intracellular signaling via ERK and AKT kinases and cAMP generation, but not for signaling mediated by the nuclear hormone receptor. Ubiquitinated; regulated by LATS1 via DCAF1 it leads to ESR1 proteasomal degradation. Deubiquitinated by OTUB1. Ubiquitinated by STUB1/CHIP; in the CA1 hippocampal region following loss of endogenous circulating estradiol (17-beta-estradiol/E2). Ubiquitinated by UBR5, leading to its degradation: UBR5 specifically recognizes and binds ligand-bound ESR1 when it is not associated with coactivators (NCOAs). In presence of NCOAs, the UBR5-degron is not accessible, preventing its ubiquitination and degradation. Post-translationally, dimethylated by PRMT1 at Arg-264. The methylation may favor cytoplasmic localization. Demethylated by JMJD6 at Arg-264.

It localises to the nucleus. The protein localises to the cytoplasm. It is found in the golgi apparatus. Its subcellular location is the cell membrane. In terms of biological role, nuclear hormone receptor. The steroid hormones and their receptors are involved in the regulation of eukaryotic gene expression and affect cellular proliferation and differentiation in target tissues. Ligand-dependent nuclear transactivation involves either direct homodimer binding to a palindromic estrogen response element (ERE) sequence or association with other DNA-binding transcription factors, such as AP-1/c-Jun, c-Fos, ATF-2, Sp1 and Sp3, to mediate ERE-independent signaling. Ligand binding induces a conformational change allowing subsequent or combinatorial association with multiprotein coactivator complexes through LXXLL motifs of their respective components. Mutual transrepression occurs between the estrogen receptor (ER) and NF-kappa-B in a cell-type specific manner. Decreases NF-kappa-B DNA-binding activity and inhibits NF-kappa-B-mediated transcription from the IL6 promoter and displace RELA/p65 and associated coregulators from the promoter. Recruited to the NF-kappa-B response element of the CCL2 and IL8 promoters and can displace CREBBP. Present with NF-kappa-B components RELA/p65 and NFKB1/p50 on ERE sequences. Can also act synergistically with NF-kappa-B to activate transcription involving respective recruitment adjacent response elements; the function involves CREBBP. Can activate the transcriptional activity of TFF1. Also mediates membrane-initiated estrogen signaling involving various kinase cascades. Essential for MTA1-mediated transcriptional regulation of BRCA1 and BCAS3. Maintains neuronal survival in response to ischemic reperfusion injury when in the presence of circulating estradiol (17-beta-estradiol/E2). The sequence is that of Estrogen receptor (Esr1) from Mus musculus (Mouse).